Reading from the N-terminus, the 715-residue chain is Protein MTSS 2 (715 aa).

The region spanning 1–249 is the IMD domain; the sequence is METAEKECGA…EQVIKDLKGS (249 aa). Residues 134-156 are a coiled coil; it reads HEIKKKSSDTLKLQKKARKGKGD. Composition is skewed to low complexity over residues 253 to 274, 284 to 295, and 312 to 330; these read WSYQTPPSSPSSSNSRKSSMCS, SSVSSHDSGFVS, and TSQKSSSSASSEASETCQS. 3 disordered regions span residues 253–405, 420–485, and 527–562; these read WSYQ…EVSP, LEHQ…RNSN, and IRRTPSTKPTVRRALSSAGPIPIRPPIVPVKTPTVP. Threonine 257 carries the phosphothreonine modification. Serine 261 bears the Phosphoserine mark. The span at 331 to 341 shows a compositional bias: polar residues; sequence VSECSSPTSDW. Basic and acidic residues predominate over residues 360–369; the sequence is DRVEHLRDTE. Residue serine 404 is modified to Phosphoserine. The segment covering 429-442 has biased composition (low complexity); the sequence is SLQYSSGYSTQTTT. The span at 443-455 shows a compositional bias: polar residues; it reads PSCSEDTIPSQGS. Residues serine 542, serine 564, serine 575, serine 587, serine 597, and serine 602 each carry the phosphoserine modification. Threonine 606 is modified (phosphothreonine). The interval 661-690 is disordered; the sequence is FPFPTALSATPSEETPTPPPAATSDPPAED. Positions 687-704 constitute a WH2 domain; that stretch reads PAEDMLVAIRRGVRLRRT.

The protein belongs to the MTSS family. As to quaternary structure, interacts (via IMD domain) with RAC1; this interaction may be important to potentiate PDGF-induced RAC1 activation.

Its subcellular location is the cytoplasm. The protein localises to the cell projection. It localises to the ruffle. In terms of biological role, involved in plasma membrane dynamics. Potentiated PDGF-mediated formation of membrane ruffles and lamellipodia in fibroblasts, acting via RAC1 activation. May function in actin bundling. This chain is Protein MTSS 2 (Mtss2), found in Mus musculus (Mouse).